Reading from the N-terminus, the 216-residue chain is Ethylene-inducing xylanase (216 aa).

The N-terminal stretch at 1 to 19 (MVSFSSLFVAACAAVTAFA) is a signal peptide. The GH11 domain occupies 28 to 216 (AITTSQQGTS…SSGSSDITVS (189 aa)). The active-site Nucleophile is Glu-112. Glu-203 acts as the Proton donor in catalysis.

It belongs to the glycosyl hydrolase 11 (cellulase G) family.

The protein resides in the secreted. The catalysed reaction is Endohydrolysis of (1-&gt;4)-beta-D-xylosidic linkages in xylans.. The protein operates within glycan degradation; xylan degradation. Endo-1,4-beta-xylanase involved in the hydrolysis of xylan, a major structural heterogeneous polysaccharide found in plant biomass representing the second most abundant polysaccharide in the biosphere, after cellulose. Acts as a pathogen-associated molecular pattern (PAMP) that can trigger plant cell death. Triggers a series of immune responses in citrus fruit and enhanced the resistance of citrus and other fruit against fungal pathogens. The polypeptide is Ethylene-inducing xylanase (Penicillium digitatum (strain Pd1 / CECT 20795) (Green mold)).